The following is a 434-amino-acid chain: V-type ATP synthase beta chain (434 aa).

This sequence belongs to the ATPase alpha/beta chains family.

Functionally, produces ATP from ADP in the presence of a proton gradient across the membrane. The V-type beta chain is a regulatory subunit. This Borreliella burgdorferi (strain ATCC 35210 / DSM 4680 / CIP 102532 / B31) (Borrelia burgdorferi) protein is V-type ATP synthase beta chain (atpB).